The sequence spans 64 residues: Large ribosomal subunit protein bL33c (64 aa).

It belongs to the bacterial ribosomal protein bL33 family.

It is found in the plastid. The protein resides in the cyanelle. The protein is Large ribosomal subunit protein bL33c (rpl33) of Cyanophora paradoxa.